The following is a 736-amino-acid chain: Cytosolic neutral trehalase (736 aa).

The segment at 1-47 (MSEAPQARRVGSVDDHSVYDDAKTYYTSEERHNNSRSGPRQRTYSQN) is disordered. Basic and acidic residues predominate over residues 11–33 (GSVDDHSVYDDAKTYYTSEERHN). The span at 35–47 (SRSGPRQRTYSQN) shows a compositional bias: polar residues. Residues D92, D94, N96, Q98, and D103 each coordinate Ca(2+). Residues R279, 286 to 287 (WD), N323, 332 to 334 (RSQ), E399, R448, and G451 contribute to the substrate site. Catalysis depends on proton donor/acceptor residues D453 and E657.

This sequence belongs to the glycosyl hydrolase 37 family. Ca(2+) serves as cofactor.

It localises to the cytoplasm. The enzyme catalyses alpha,alpha-trehalose + H2O = alpha-D-glucose + beta-D-glucose. The protein operates within carbohydrate degradation. Functionally, hydrolyzes intracellular trehalose to glucose. Plays a role in pathogenicity, specifically in proliferation of invasive hyphae in rice blast disease. This is Cytosolic neutral trehalase (NTH1) from Pyricularia oryzae (strain 70-15 / ATCC MYA-4617 / FGSC 8958) (Rice blast fungus).